Consider the following 480-residue polypeptide: NADH-quinone oxidoreductase subunit N (480 aa).

Helical transmembrane passes span 13 to 33, 41 to 61, 81 to 101, 107 to 127, 132 to 152, 167 to 187, 212 to 232, 245 to 265, 276 to 296, 314 to 334, 373 to 393, 413 to 433, and 454 to 474; these read ISPM…QFLI, PLWV…YHTT, VWLS…APPF, TLFP…MFLT, LIVI…MIGM, FLLG…LYGG, LGLG…PFHS, ITGF…IILF, VWKY…NIVA, AGYI…YYLF, ALAL…IGFW, LLFG…KITI, and PTLG…WIFF.

It belongs to the complex I subunit 2 family. As to quaternary structure, NDH-1 is composed of 14 different subunits. Subunits NuoA, H, J, K, L, M, N constitute the membrane sector of the complex.

It is found in the cell inner membrane. It catalyses the reaction a quinone + NADH + 5 H(+)(in) = a quinol + NAD(+) + 4 H(+)(out). Functionally, NDH-1 shuttles electrons from NADH, via FMN and iron-sulfur (Fe-S) centers, to quinones in the respiratory chain. The immediate electron acceptor for the enzyme in this species is believed to be ubiquinone. Couples the redox reaction to proton translocation (for every two electrons transferred, four hydrogen ions are translocated across the cytoplasmic membrane), and thus conserves the redox energy in a proton gradient. In Leptospira biflexa serovar Patoc (strain Patoc 1 / Ames), this protein is NADH-quinone oxidoreductase subunit N.